Reading from the N-terminus, the 79-residue chain is ATP synthase subunit c (79 aa).

The next 2 membrane-spanning stretches (helical) occupy residues I11–L31 and F53–Y73.

It belongs to the ATPase C chain family. As to quaternary structure, F-type ATPases have 2 components, F(1) - the catalytic core - and F(0) - the membrane proton channel. F(1) has five subunits: alpha(3), beta(3), gamma(1), delta(1), epsilon(1). F(0) has three main subunits: a(1), b(2) and c(10-14). The alpha and beta chains form an alternating ring which encloses part of the gamma chain. F(1) is attached to F(0) by a central stalk formed by the gamma and epsilon chains, while a peripheral stalk is formed by the delta and b chains.

The protein localises to the cell membrane. In terms of biological role, f(1)F(0) ATP synthase produces ATP from ADP in the presence of a proton or sodium gradient. F-type ATPases consist of two structural domains, F(1) containing the extramembraneous catalytic core and F(0) containing the membrane proton channel, linked together by a central stalk and a peripheral stalk. During catalysis, ATP synthesis in the catalytic domain of F(1) is coupled via a rotary mechanism of the central stalk subunits to proton translocation. Functionally, key component of the F(0) channel; it plays a direct role in translocation across the membrane. A homomeric c-ring of between 10-14 subunits forms the central stalk rotor element with the F(1) delta and epsilon subunits. The chain is ATP synthase subunit c from Buchnera aphidicola subsp. Acyrthosiphon pisum (strain 5A).